Consider the following 69-residue polypeptide: Large ribosomal subunit protein uL29 (69 aa).

The protein belongs to the universal ribosomal protein uL29 family.

This Clostridium perfringens (strain ATCC 13124 / DSM 756 / JCM 1290 / NCIMB 6125 / NCTC 8237 / Type A) protein is Large ribosomal subunit protein uL29.